The sequence spans 248 residues: DNA repair protein RecO (248 aa).

The protein belongs to the RecO family.

Involved in DNA repair and RecF pathway recombination. The polypeptide is DNA repair protein RecO (Bacillus cereus (strain 03BB102)).